Reading from the N-terminus, the 257-residue chain is Putative phosphatase YkrA (257 aa).

Asp9 functions as the Nucleophile in the catalytic mechanism. Mg(2+) is bound at residue Asp9. Ile10 contributes to the phosphate binding site. A Mg(2+)-binding site is contributed by Asp11. Phosphate is bound by residues 43–44 (SG) and Lys183. Asp206 is a Mg(2+) binding site. Asn209 is a phosphate binding site.

The protein belongs to the HAD-like hydrolase superfamily. Cof family. Requires Mg(2+) as cofactor.

In Bacillus subtilis (strain 168), this protein is Putative phosphatase YkrA (ykrA).